The following is a 319-amino-acid chain: D-alanine--D-alanine ligase (319 aa).

Residues 109–313 (KRVWLAEGLP…YEQLCLHILQ (205 aa)) form the ATP-grasp domain. An ATP-binding site is contributed by 139 to 194 (PDDLGLPLIVKPPREGSSIGVTKVLGYSQMQDAVALSARHDPDVLCEEFIDGAEVT). The Mg(2+) site is built by Asp-266, Glu-280, and Asn-282.

The protein belongs to the D-alanine--D-alanine ligase family. It depends on Mg(2+) as a cofactor. Mn(2+) is required as a cofactor.

Its subcellular location is the cytoplasm. It catalyses the reaction 2 D-alanine + ATP = D-alanyl-D-alanine + ADP + phosphate + H(+). It functions in the pathway cell wall biogenesis; peptidoglycan biosynthesis. Cell wall formation. The sequence is that of D-alanine--D-alanine ligase from Methylibium petroleiphilum (strain ATCC BAA-1232 / LMG 22953 / PM1).